A 997-amino-acid polypeptide reads, in one-letter code: Kinesin-like protein KIF19 (997 aa).

Residues 11 to 346 (QLMVALRVRP…LTYAGRAKNI (336 aa)) form the Kinesin motor domain. 104 to 111 (GPTGCGKT) is a binding site for ATP. A coiled-coil region spans residues 361–388 (IAQYTSIIADLRGEIQRLKCKIDQQAGR). Over residues 477 to 494 (EERRKESYTKEDSEKDSD) the composition is skewed to basic and acidic residues. Disordered stretches follow at residues 477-509 (EERR…EVAS), 665-704 (KITP…GTDS), 718-759 (QVKS…SSEN), and 784-997 (AAQR…LQHN). A coiled-coil region spans residues 506–551 (EVASARENIAALVGEQKKLRKEKLALEQRCRELRARGRRLEETLPR). The span at 683–697 (KTLSSEAQRPQNNTL) shows a compositional bias: polar residues. The segment covering 750–759 (INSSPESSEN) has biased composition (low complexity). Polar residues-rich tracts occupy residues 835 to 851 (TLQH…STGE) and 950 to 959 (PNQNTGSGNP).

It belongs to the TRAFAC class myosin-kinesin ATPase superfamily. Kinesin family. As to expression, strongly expressed in the oviduct and trachea. Expressed in testis, lung, ovary and brain.

Its subcellular location is the cytoplasm. The protein localises to the cytoskeleton. The protein resides in the cell projection. It localises to the cilium. Functionally, plus end-directed microtubule-dependent motor protein that regulates the length of motile cilia by mediating depolymerization of microtubules at ciliary tips. The polypeptide is Kinesin-like protein KIF19 (Kif19) (Mus musculus (Mouse)).